A 640-amino-acid polypeptide reads, in one-letter code: 1-deoxy-D-xylulose-5-phosphate synthase (640 aa).

Thiamine diphosphate is bound by residues histidine 79 and 120–122 (AHS). Aspartate 151 serves as a coordination point for Mg(2+). Residues 152–153 (GA), asparagine 180, tyrosine 289, and glutamate 371 contribute to the thiamine diphosphate site. Asparagine 180 lines the Mg(2+) pocket.

This sequence belongs to the transketolase family. DXPS subfamily. In terms of assembly, homodimer. Requires Mg(2+) as cofactor. The cofactor is thiamine diphosphate.

It catalyses the reaction D-glyceraldehyde 3-phosphate + pyruvate + H(+) = 1-deoxy-D-xylulose 5-phosphate + CO2. It functions in the pathway metabolic intermediate biosynthesis; 1-deoxy-D-xylulose 5-phosphate biosynthesis; 1-deoxy-D-xylulose 5-phosphate from D-glyceraldehyde 3-phosphate and pyruvate: step 1/1. Functionally, catalyzes the acyloin condensation reaction between C atoms 2 and 3 of pyruvate and glyceraldehyde 3-phosphate to yield 1-deoxy-D-xylulose-5-phosphate (DXP). The polypeptide is 1-deoxy-D-xylulose-5-phosphate synthase (Erythrobacter litoralis (strain HTCC2594)).